Consider the following 421-residue polypeptide: Lipid II:glycine glycyltransferase (421 aa).

Belongs to the FemABX family. In terms of assembly, monomer.

It localises to the cytoplasm. The catalysed reaction is beta-D-GlcNAc-(1-&gt;4)-Mur2Ac(oyl-L-Ala-D-isoglutaminyl-L-Lys-D-Ala-D-Ala)-di-trans,octa-cis-undecaprenyl diphosphate + glycyl-tRNA(Gly) = beta-D-GlcNAc-(1-&gt;4)-Mur2Ac(oyl-L-Ala-D-isoglutaminyl-L-Lys-(N(6)-Gly)-D-Ala-D-Ala)-di-trans,octa-cis-undecaprenyl diphosphate + tRNA(Gly) + H(+). Its function is as follows. Catalyzes the incorporation of the first glycine of the pentaglycine interpeptide bridge, which is characteristic of the S.aureus peptidoglycan. This glycine is added to the epsilon-amino group of the L-lysine of the membrane-bound lipid II intermediate (GlcNAc-(beta-1,4)-N-acetylmuramic acid(-L-Ala-D-iGln-L-Lys-D-Ala-D-Ala)-pyrophosphoryl-undecaprenol), using glycyl-tRNA(Gly) as donor, in a ribosome-independent mechanism. Involved in methicillin resistance. The protein is Lipid II:glycine glycyltransferase (femX) of Staphylococcus aureus (strain COL).